A 225-amino-acid chain; its full sequence is PKHD-type hydroxylase YbiX (225 aa).

The Fe2OG dioxygenase domain maps to 78-177 (TLSTPLFNRY…RVASFMWIQS (100 aa)). Residues His-96, Asp-98, and His-158 each coordinate Fe cation. Position 168 (Arg-168) interacts with 2-oxoglutarate.

It depends on Fe(2+) as a cofactor. L-ascorbate serves as cofactor.

This chain is PKHD-type hydroxylase YbiX, found in Escherichia fergusonii (strain ATCC 35469 / DSM 13698 / CCUG 18766 / IAM 14443 / JCM 21226 / LMG 7866 / NBRC 102419 / NCTC 12128 / CDC 0568-73).